The chain runs to 39 residues: Photosystem II reaction center protein X (39 aa).

Residues 11–31 form a helical membrane-spanning segment; sequence SLLWGAIVVVIPLSAALLFIS.

This sequence belongs to the PsbX family. Type 1 subfamily. In terms of assembly, PSII is composed of 1 copy each of membrane proteins PsbA, PsbB, PsbC, PsbD, PsbE, PsbF, PsbH, PsbI, PsbJ, PsbK, PsbL, PsbM, PsbT, PsbX, PsbY, PsbZ, Psb30/Ycf12, at least 3 peripheral proteins of the oxygen-evolving complex and a large number of cofactors. It forms dimeric complexes.

The protein resides in the plastid. Its subcellular location is the cyanelle thylakoid membrane. Functionally, involved in the binding and/or turnover of quinones at the Q(B) site of photosystem II (PSII). PSII is a light-driven water plastoquinone oxidoreductase, using light energy to abstract electrons from H(2)O, generating a proton gradient subsequently used for ATP formation. This Cyanophora paradoxa protein is Photosystem II reaction center protein X.